A 218-amino-acid chain; its full sequence is Peroxiredoxin-like 2A (218 aa).

Residues 3–101 (MWSIGVGAVG…DELGVPLYAV (99 aa)) are thioredoxin-like fold. Catalysis depends on redox-active residues C74 and C77.

It belongs to the peroxiredoxin-like PRXL2 family. PRXL2A subfamily. In terms of tissue distribution, expressed in kidney, liver, skin, and brain. Widely expressed with highest levels detected in adipose tissue.

It localises to the cytoplasm. It is found in the secreted. Functionally, involved in redox regulation of the cell. Acts as an antioxidant. Inhibits TNFSF11-induced NFKB1 and JUN activation and osteoclast differentiation. May affect bone resorption and help to maintain bone mass. Acts as a negative regulator of macrophage-mediated inflammation by inhibiting macrophage production of inflammatory cytokines, probably through suppression of the MAPK signaling pathway. The polypeptide is Peroxiredoxin-like 2A (Prxl2a) (Mus musculus (Mouse)).